We begin with the raw amino-acid sequence, 126 residues long: DNA-directed RNA polymerase I subunit RPA12 (126 aa).

Zn(2+) contacts are provided by Cys20, Cys23, Cys38, Cys41, Cys87, and Cys90. Residues Cys20–Cys41 form a C4-type zinc finger. The TFIIS-type zinc finger occupies Val83–Lys123. The Hairpin motif lies at Asp106–Glu107. Positions 115 and 118 each coordinate Zn(2+).

This sequence belongs to the archaeal RpoM/eukaryotic RPA12/RPB9/RPC11 RNA polymerase family. Component of the RNA polymerase I (Pol I) complex consisting of 13 subunits: a ten-subunit catalytic core composed of POLR1A/RPA1, POLR1B/RPA2, POLR1C/RPAC1, POLR1D/RPAC2, POLR1H/RPA12, POLR2E/RPABC1, POLR2F/RPABC2, POLR2H/RPABC3, POLR2K/RPABC4 and POLR2L/RPABC5; a mobile stalk subunit POLR1F/RPA43 protruding from the core and additional subunits homologous to general transcription factors POLR1E/RPA49 and POLR1G/RPA34. Part of Pol I pre-initiation complex (PIC), in which Pol I core assembles with RRN3 and promoter-bound UTBF and SL1/TIF-IB complex.

The protein localises to the nucleus. It localises to the nucleolus. In terms of biological role, core component of RNA polymerase I (Pol I), a DNA-dependent RNA polymerase which synthesizes ribosomal RNA precursors using the four ribonucleoside triphosphates as substrates. Can mediate Pol I proofreading of the nascent RNA transcript. Anchors into the Pol I active site to monitor transcription fidelity and cleave mis-incorporated 5'-ribonucleotides. In Homo sapiens (Human), this protein is DNA-directed RNA polymerase I subunit RPA12.